Consider the following 333-residue polypeptide: Holliday junction branch migration complex subunit RuvB (333 aa).

The interval 1–182 (MDERLLSGES…FGVLSRLEYY (182 aa)) is large ATPase domain (RuvB-L). ATP contacts are provided by residues L21, R22, G63, K66, T67, T68, 129–131 (EDF), R172, Y182, and R219. Position 67 (T67) interacts with Mg(2+). Residues 183–253 (TVDQLSAIVE…ITQMALELLQ (71 aa)) are small ATPAse domain (RuvB-S). The interval 256–333 (KLGLDHIDHK…EHFGMEIPKV (78 aa)) is head domain (RuvB-H). Positions 311 and 316 each coordinate DNA.

The protein belongs to the RuvB family. In terms of assembly, homohexamer. Forms an RuvA(8)-RuvB(12)-Holliday junction (HJ) complex. HJ DNA is sandwiched between 2 RuvA tetramers; dsDNA enters through RuvA and exits via RuvB. An RuvB hexamer assembles on each DNA strand where it exits the tetramer. Each RuvB hexamer is contacted by two RuvA subunits (via domain III) on 2 adjacent RuvB subunits; this complex drives branch migration. In the full resolvosome a probable DNA-RuvA(4)-RuvB(12)-RuvC(2) complex forms which resolves the HJ.

The protein localises to the cytoplasm. It catalyses the reaction ATP + H2O = ADP + phosphate + H(+). Functionally, the RuvA-RuvB-RuvC complex processes Holliday junction (HJ) DNA during genetic recombination and DNA repair, while the RuvA-RuvB complex plays an important role in the rescue of blocked DNA replication forks via replication fork reversal (RFR). RuvA specifically binds to HJ cruciform DNA, conferring on it an open structure. The RuvB hexamer acts as an ATP-dependent pump, pulling dsDNA into and through the RuvAB complex. RuvB forms 2 homohexamers on either side of HJ DNA bound by 1 or 2 RuvA tetramers; 4 subunits per hexamer contact DNA at a time. Coordinated motions by a converter formed by DNA-disengaged RuvB subunits stimulates ATP hydrolysis and nucleotide exchange. Immobilization of the converter enables RuvB to convert the ATP-contained energy into a lever motion, pulling 2 nucleotides of DNA out of the RuvA tetramer per ATP hydrolyzed, thus driving DNA branch migration. The RuvB motors rotate together with the DNA substrate, which together with the progressing nucleotide cycle form the mechanistic basis for DNA recombination by continuous HJ branch migration. Branch migration allows RuvC to scan DNA until it finds its consensus sequence, where it cleaves and resolves cruciform DNA. In Bacillus cereus (strain G9842), this protein is Holliday junction branch migration complex subunit RuvB.